The following is a 229-amino-acid chain: DNA repair protein RecO (229 aa).

It belongs to the RecO family.

Its function is as follows. Involved in DNA repair and RecF pathway recombination. The protein is DNA repair protein RecO of Legionella pneumophila (strain Corby).